A 314-amino-acid chain; its full sequence is tRNA dimethylallyltransferase (314 aa).

ATP is bound at residue 12–19; that stretch reads GPTASGKT. Position 14–19 (14–19) interacts with substrate; the sequence is TASGKT. 2 interaction with substrate tRNA regions span residues 37 to 40 and 161 to 165; these read DSAQ and QRIQR.

This sequence belongs to the IPP transferase family. Monomer. The cofactor is Mg(2+).

The enzyme catalyses adenosine(37) in tRNA + dimethylallyl diphosphate = N(6)-dimethylallyladenosine(37) in tRNA + diphosphate. Functionally, catalyzes the transfer of a dimethylallyl group onto the adenine at position 37 in tRNAs that read codons beginning with uridine, leading to the formation of N6-(dimethylallyl)adenosine (i(6)A). The polypeptide is tRNA dimethylallyltransferase (Nitrosococcus oceani (strain ATCC 19707 / BCRC 17464 / JCM 30415 / NCIMB 11848 / C-107)).